The following is a 990-amino-acid chain: Aminopeptidase Q (990 aa).

Topologically, residues 2 to 13 are cytoplasmic; that stretch reads GPPSSSGFYVSR. The helical; Signal-anchor for type II membrane protein transmembrane segment at 14 to 34 threads the bilayer; the sequence is AVALLLAGLVAALLLALAVLA. The Lumenal portion of the chain corresponds to 35–990; sequence ALYGHCERVP…RIAAWLRRNT (956 aa). Positions 48–91 are disordered; sequence LPGLRDLEAESSPPLRQKPTPTPKPSSARELAVTTTPSNWRPPG. N-linked (GlcNAc...) asparagine glycans are attached at residues N132 and N168. E240 contacts substrate. 4 N-linked (GlcNAc...) asparagine glycosylation sites follow: N261, N288, N319, and N346. 379 to 383 serves as a coordination point for substrate; sequence HAMEN. H415 lines the Zn(2+) pocket. The Proton acceptor role is filled by E416. Zn(2+) contacts are provided by H419 and E438. Residue Y503 is the Proton donor of the active site. N607 and N653 each carry an N-linked (GlcNAc...) asparagine glycan.

It belongs to the peptidase M1 family. As to quaternary structure, homodimer. Zn(2+) serves as cofactor. N-glycosylated. As to expression, specifically expressed in placenta and not in other tissues. Mainly found at the cell surface region of the extravillous trophoblasts. Detected on extravillous trophoblasts in the outer layer of the chorion laeve in the fetal membrane Not detected on either fetal amnionic epithelial cells or maternal decidual cells. Also detected in the migrating extravillous trophoblasts in the maternal decidual tissues (at protein level).

Its subcellular location is the membrane. Its activity is regulated as follows. Inhibited by bestatin. In terms of biological role, metalloprotease which may be important for placentation by regulating biological activity of key peptides at the embryo-maternal interface. On synthetic substrates it shows a marked preference for Leu-4-methylcoumaryl-7-amide (Leu-MCA) over Met-MCA, Arg-LCA and Lys-LCA. Cleaves the N-terminal amino acid of several peptides such as angiotensin-3, kisspeptin-10 and endokinin C. This is Aminopeptidase Q from Homo sapiens (Human).